We begin with the raw amino-acid sequence, 290 residues long: uncharacterized protein (290 aa).

Transmembrane regions (helical) follow at residues 40 to 60, 80 to 100, 110 to 130, 139 to 159, 166 to 188, 200 to 220, and 238 to 260; these read MHVILLSALFYQIINILSPVI, DAHVVSSVQSIVLICLGYTCL, LFGYSVVAGDIYALTAGYFVW, VHITGIGFVIHAIAALFVITF, MYYGPTYLSWELSTPFLNIHYFL, MINGFILIVTFICVRIAWGWF, and WALSLFYLAANMSLNCLNLFWVS. A TLC domain is found at 74 to 271; it reads KTRLNWDAHV…MIDAIRRRAH (198 aa).

The protein resides in the endoplasmic reticulum membrane. This is an uncharacterized protein from Schizosaccharomyces pombe (strain 972 / ATCC 24843) (Fission yeast).